An 89-amino-acid chain; its full sequence is Small ribosomal subunit protein uS15 (89 aa).

The protein belongs to the universal ribosomal protein uS15 family. As to quaternary structure, part of the 30S ribosomal subunit. Forms a bridge to the 50S subunit in the 70S ribosome, contacting the 23S rRNA.

One of the primary rRNA binding proteins, it binds directly to 16S rRNA where it helps nucleate assembly of the platform of the 30S subunit by binding and bridging several RNA helices of the 16S rRNA. In terms of biological role, forms an intersubunit bridge (bridge B4) with the 23S rRNA of the 50S subunit in the ribosome. This is Small ribosomal subunit protein uS15 from Levilactobacillus brevis (strain ATCC 367 / BCRC 12310 / CIP 105137 / JCM 1170 / LMG 11437 / NCIMB 947 / NCTC 947) (Lactobacillus brevis).